The following is a 350-amino-acid chain: Phosphoribosylformylglycinamidine cyclo-ligase (350 aa).

The protein belongs to the AIR synthase family.

It localises to the cytoplasm. It carries out the reaction 2-formamido-N(1)-(5-O-phospho-beta-D-ribosyl)acetamidine + ATP = 5-amino-1-(5-phospho-beta-D-ribosyl)imidazole + ADP + phosphate + H(+). It participates in purine metabolism; IMP biosynthesis via de novo pathway; 5-amino-1-(5-phospho-D-ribosyl)imidazole from N(2)-formyl-N(1)-(5-phospho-D-ribosyl)glycinamide: step 2/2. This is Phosphoribosylformylglycinamidine cyclo-ligase from Syntrophotalea carbinolica (strain DSM 2380 / NBRC 103641 / GraBd1) (Pelobacter carbinolicus).